The following is a 374-amino-acid chain: Flap endonuclease 1 (374 aa).

The interval 1-105 (MGVKGLNQLI…GELEKRMIRK (105 aa)) is N-domain. Aspartate 34 contributes to the Mg(2+) binding site. The DNA site is built by arginine 47 and arginine 71. Residues aspartate 87, glutamate 159, glutamate 161, aspartate 180, and aspartate 182 each coordinate Mg(2+). Positions 123–254 (EMVRYEKRSV…VTAFKLIKEH (132 aa)) are I-domain. Glutamate 159 lines the DNA pocket. DNA-binding residues include glycine 232 and aspartate 234. Position 234 (aspartate 234) interacts with Mg(2+). The interaction with PCNA stretch occupies residues 341–349 (VQGRLDGFF). A compositionally biased stretch (basic and acidic residues) spans 354–365 (TEKRKPEQDKKT). Residues 354–374 (TEKRKPEQDKKTKGSKKAKKK) are disordered.

Belongs to the XPG/RAD2 endonuclease family. FEN1 subfamily. Interacts with PCNA. Three molecules of FEN1 bind to one PCNA trimer with each molecule binding to one PCNA monomer. PCNA stimulates the nuclease activity without altering cleavage specificity. The cofactor is Mg(2+). Post-translationally, phosphorylated. Phosphorylation upon DNA damage induces relocalization to the nuclear plasma.

Its subcellular location is the nucleus. The protein resides in the nucleolus. It localises to the nucleoplasm. It is found in the mitochondrion. In terms of biological role, structure-specific nuclease with 5'-flap endonuclease and 5'-3' exonuclease activities involved in DNA replication and repair. During DNA replication, cleaves the 5'-overhanging flap structure that is generated by displacement synthesis when DNA polymerase encounters the 5'-end of a downstream Okazaki fragment. It enters the flap from the 5'-end and then tracks to cleave the flap base, leaving a nick for ligation. Also involved in the long patch base excision repair (LP-BER) pathway, by cleaving within the apurinic/apyrimidinic (AP) site-terminated flap. Acts as a genome stabilization factor that prevents flaps from equilibrating into structures that lead to duplications and deletions. Also possesses 5'-3' exonuclease activity on nicked or gapped double-stranded DNA, and exhibits RNase H activity. Also involved in replication and repair of rDNA and in repairing mitochondrial DNA. This is Flap endonuclease 1 from Meyerozyma guilliermondii (strain ATCC 6260 / CBS 566 / DSM 6381 / JCM 1539 / NBRC 10279 / NRRL Y-324) (Yeast).